A 109-amino-acid polypeptide reads, in one-letter code: Oncomodulin (109 aa).

Ser-2 carries the post-translational modification N-acetylserine. 2 consecutive EF-hand domains span residues 39-74 (MSASQVKDIFRFIDNDQSGYLDGDELKYFLQKFQSD) and 78-109 (LTESETKSLMDAADNDGDGKIGADEFQEMVHS). Ca(2+) is bound by residues Asp-52, Asp-54, Ser-56, Tyr-58, Glu-63, Asp-91, Asp-93, Asp-95, Lys-97, and Glu-102.

This sequence belongs to the parvalbumin family. As to expression, found in tumor tissues and not detected in normal tissues.

Its function is as follows. Has some calmodulin-like activity with respect to enzyme activation and growth regulation. Binds two calcium ions. This chain is Oncomodulin (Ocm), found in Rattus norvegicus (Rat).